Reading from the N-terminus, the 1083-residue chain is Neisserial autotransporter lipoprotein NalP (1083 aa).

The signal sequence occupies residues 1–27 (MRTTPTFPTKTFKPTAMALAVATTLSA). Cys-28 carries the N-palmitoyl cysteine lipid modification. Cys-28 carries S-diacylglycerol cysteine lipidation. The Peptidase S8 domain occupies 111–483 (NDAYKNLINL…WGLLDAGKAM (373 aa)). Catalysis depends on charge relay system residues Asp-139, His-211, and Ser-427. Residues 809-1083 (DGLDHNGTGL…SGRVGVGYRF (275 aa)) form the Autotransporter domain. 12 consecutive transmembrane segments (beta stranded) span residues 819-828 (RVIAQTQQDG), 844-852 (TQTVGIAAK), 858-866 (TAAATLGMG), 883-891 (SLFAGIRHD), 897-906 (YLKGLFSYGR), 931-941 (QLGALGGVNVP), 948-958 (LTVEGGLRYDL), 984-994 (VGLAGLKLSQP), 1000-1010 (VLFATAGVERD), 1041-1052 (RLVAGLGADVEF), 1057-1066 (NGLARYSYAG), and 1074-1083 (SGRVGVGYRF).

This sequence belongs to the peptidase S8 family. A fusion protein of the first 44 residues with beta-lactamase is lipidated in E.coli, strongly suggesting this is a lipoprotein in situ. The lipidated form is briefly retained on the cell surface which allows it to process its endogenous substrates on the cell surface before the passenger domain is released into the medium.

Its subcellular location is the cell outer membrane. It localises to the cell surface. The protein resides in the secreted. Functionally, major human immunogenic protein. Autotransporter with a secreted protease domain involved in processing other autotransporter proteins including App and IgA. Probably autoprocesses to release the about 70 kDa passenger domain. Processes the lactoferrin receptor lipoprotein subunit (LbpB) extracellularly, releasing it from the cell surface. LbpB release protects bacteria against complement-mediated killing by anti-LbpB antibodies. Processes NHBA. Lipidation slows its auto-processing, probably allowing it to act on endogenous substrates on the cell surface before the passenger domain is released into the medium. The C-terminal beta-barrel domain inserts into the outer membrane where it probably exports the N-terminal passenger domain. Both the cell surface protein (Neisserial autotransporter lipoprotein NalP) and the passenger domain cleave human (host) complement factor C3, generating a shorter alpha chain and a longer beta chain than normal. In terms of biological role, plays a role in extracellular-DNA (eDNA) mediated biofilm formation. In some strains (including cc32 strain H44/76 but not cc11 strain B16B6) eDNA stimulates biofilm formation. When NalP is not expressed (and no longer processes NHBA or IgA) biofilm formation increases. This is probably because the number of positively charged, DNA-binding peptides on the cell surface rises, resulting in increased biofilm formation. Cleaves human (host) complement factor C3, generating a shorter alpha chain and a longer beta chain than normal. Does not act on mouse or rabbit C3. Cleavage causes C3b degradation by human CFI and CFH, decreases deposition of C3b on the bacteria surface and probably facilitates complement escape. This is Neisserial autotransporter lipoprotein NalP from Neisseria meningitidis serogroup B / serotype 15 (strain H44/76).